The following is a 316-amino-acid chain: Ribosomal protein L11 methyltransferase (316 aa).

Residues Thr-163, Gly-184, Asp-206, and Asn-249 each contribute to the S-adenosyl-L-methionine site.

The protein belongs to the methyltransferase superfamily. PrmA family.

Its subcellular location is the cytoplasm. The catalysed reaction is L-lysyl-[protein] + 3 S-adenosyl-L-methionine = N(6),N(6),N(6)-trimethyl-L-lysyl-[protein] + 3 S-adenosyl-L-homocysteine + 3 H(+). Methylates ribosomal protein L11. The protein is Ribosomal protein L11 methyltransferase of Pediococcus pentosaceus (strain ATCC 25745 / CCUG 21536 / LMG 10740 / 183-1w).